Reading from the N-terminus, the 436-residue chain is Platelet-activating factor acetylhydrolase (436 aa).

Residues 1–21 (MAPPKLHTLFCLSGFLALVHP) form the signal peptide. Residues Asn76 and Asn200 are each glycosylated (N-linked (GlcNAc...) asparagine). Ser271 (nucleophile) is an active-site residue. The active-site Charge relay system is Asp294. Asn324 carries N-linked (GlcNAc...) asparagine glycosylation. His349 acts as the Charge relay system in catalysis.

Belongs to the AB hydrolase superfamily. Lipase family. In terms of processing, N-glycosylated. In terms of tissue distribution, plasma.

The protein resides in the secreted. Its subcellular location is the extracellular space. The enzyme catalyses a 1-O-alkyl-2-acetyl-sn-glycero-3-phosphocholine + H2O = a 1-O-alkyl-sn-glycero-3-phosphocholine + acetate + H(+). It catalyses the reaction 1-O-decyl-2-acetyl-sn-glycero-3-phosphocholine + H2O = 1-O-decyl-sn-glycero-3-phosphocholine + acetate + H(+). The catalysed reaction is 1-O-dodecyl-2-acetyl-sn-glycero-3-phosphocholine + H2O = 1-O-dodecyl-sn-glycero-3-phosphocholine + acetate + H(+). It carries out the reaction 1-O-tetradecyl-2-acetyl-sn-glycero-3-phosphocholine + H2O = 1-O-tetradecyl-sn-glycero-3-phosphocholine + acetate + H(+). The enzyme catalyses 1-O-hexadecyl-2-acetyl-sn-glycero-3-phosphocholine + H2O = 1-O-hexadecyl-sn-glycero-3-phosphocholine + acetate + H(+). It catalyses the reaction 1-O-octadecyl-2-acetyl-sn-glycero-3-phosphocholine + H2O = 1-O-octadecyl-sn-glycero-3-phosphocholine + acetate + H(+). The catalysed reaction is 1-hexadecanoyl-2-acetyl-sn-glycero-3-phosphocholine + H2O = 1-hexadecanoyl-sn-glycero-3-phosphocholine + acetate + H(+). It carries out the reaction 1-hexadecanoyl-2-propionyl-sn-glycero-3-phosphocholine + H2O = propanoate + 1-hexadecanoyl-sn-glycero-3-phosphocholine + H(+). The enzyme catalyses 1-hexadecanoyl-2-butanoyl-sn-glycero-3-phosphocholine + H2O = butanoate + 1-hexadecanoyl-sn-glycero-3-phosphocholine + H(+). It catalyses the reaction 1-hexadecanoyl-2-pentanoyl-sn-glycero-3-phosphocholine + H2O = pentanoate + 1-hexadecanoyl-sn-glycero-3-phosphocholine + H(+). The catalysed reaction is 1-hexadecanoyl-2-glutaroyl-sn-glycero-3-phosphocholine + H2O = glutarate + 1-hexadecanoyl-sn-glycero-3-phosphocholine + H(+). It carries out the reaction 1-hexadecanoyl-2-(5-oxopentanoyl)-sn-glycero-3-phosphocholine + H2O = 5-oxopentanoate + 1-hexadecanoyl-sn-glycero-3-phosphocholine + H(+). The enzyme catalyses 1-hexadecanoyl-2-(9-oxononanoyl)-sn-glycero-3-phosphocholine + H2O = 9-oxononanoate + 1-hexadecanoyl-sn-glycero-3-phosphocholine + H(+). It catalyses the reaction 1-hexadecanoyl-2-[9-hydroperoxy-(10E-octadecenoyl)]-sn-glycero-3-phosphocholine + H2O = 9-hydroperoxy-10E-octadecenoate + 1-hexadecanoyl-sn-glycero-3-phosphocholine + H(+). The catalysed reaction is 1-hexadecanoyl-2-(10-hydroperoxy-8E-octadecenoyl)-sn-glycero-3-phosphocholine + H2O = 10-hydroperoxy-(8E)-octadecenoate + 1-hexadecanoyl-sn-glycero-3-phosphocholine + H(+). Functionally, lipoprotein-associated calcium-independent phospholipase A2 involved in phospholipid catabolism during inflammatory and oxidative stress response. At the lipid-aqueous interface, hydrolyzes the ester bond of fatty acyl group attached at sn-2 position of phospholipids (phospholipase A2 activity). Specifically targets phospholipids with a short-chain fatty acyl group at sn-2 position. Can hydrolyze phospholipids with long fatty acyl chains, only if they carry oxidized functional groups. Hydrolyzes and inactivates platelet-activating factor (PAF, 1-O-alkyl-2-acetyl-sn-glycero-3-phosphocholine), a potent pro-inflammatory signaling lipid that acts through PTAFR on various innate immune cells. Hydrolyzes oxidatively truncated phospholipids carrying an aldehyde group at omega position, preventing their accumulation in lipoprotein particles and uncontrolled pro-inflammatory effects. As part of high-density lipoprotein (HDL) particles, can hydrolyze phospholipids having long-chain fatty acyl hydroperoxides at sn-2 position and protect against potential accumulation of these oxylipins in the vascular wall. Catalyzes the release from membrane phospholipids of F2-isoprostanes, lipid biomarkers of cellular oxidative damage. In Cavia porcellus (Guinea pig), this protein is Platelet-activating factor acetylhydrolase (PLA2G7).